A 570-amino-acid chain; its full sequence is Sulfite reductase [NADPH] hemoprotein beta-component (570 aa).

Residues C434, C440, C479, and C483 each coordinate [4Fe-4S] cluster. Siroheme is bound at residue C483.

It belongs to the nitrite and sulfite reductase 4Fe-4S domain family. Alpha(8)-beta(8). The alpha component is a flavoprotein, the beta component is a hemoprotein. Requires siroheme as cofactor. It depends on [4Fe-4S] cluster as a cofactor.

The enzyme catalyses hydrogen sulfide + 3 NADP(+) + 3 H2O = sulfite + 3 NADPH + 4 H(+). Its pathway is sulfur metabolism; hydrogen sulfide biosynthesis; hydrogen sulfide from sulfite (NADPH route): step 1/1. In terms of biological role, component of the sulfite reductase complex that catalyzes the 6-electron reduction of sulfite to sulfide. This is one of several activities required for the biosynthesis of L-cysteine from sulfate. This chain is Sulfite reductase [NADPH] hemoprotein beta-component (cysI), found in Escherichia coli (strain K12).